Here is a 184-residue protein sequence, read N- to C-terminus: GTPase RhebL1 (184 aa).

Residues 16–21 (SVGKTS), 32–38 (LEGYDPT), G63, 119–122 (NKAD), and 149–150 (SA) each bind GTP. Positions 35–43 (YDPTVENTY) match the Effector region motif. A Mg(2+)-binding site is contributed by T38. C181 carries the cysteine methyl ester modification. C181 carries S-farnesyl cysteine lipidation. The propeptide at 182-184 (YLM) is removed in mature form.

The protein belongs to the small GTPase superfamily. Rheb family. Interacts with MTOR.

It is found in the endomembrane system. Its subcellular location is the cytoplasm. It carries out the reaction GTP + H2O = GDP + phosphate + H(+). In terms of biological role, binds GTP and exhibits intrinsic GTPase activity. May activate NF-kappa-B-mediated gene transcription. Promotes signal transduction through MTOR, activates RPS6KB1, and is a downstream target of the small GTPase-activating proteins TSC1 and TSC2. This chain is GTPase RhebL1 (Rhebl1), found in Mus musculus (Mouse).